A 70-amino-acid chain; its full sequence is MNLLAAGIAAGLAAVGGAIAVAIIVKATLEGVTRQPELRGSLQTLMFIGVPLAEAVPIIAIVVSFILLFT.

The next 2 helical transmembrane spans lie at 5–25 (AAGI…AIIV) and 47–67 (FIGV…SFIL).

Belongs to the ATPase C chain family. In terms of assembly, F-type ATPases have 2 components, F(1) - the catalytic core - and F(0) - the membrane proton channel. F(1) has five subunits: alpha(3), beta(3), gamma(1), delta(1), epsilon(1). F(0) has three main subunits: a(1), b(2) and c(10-14). The alpha and beta chains form an alternating ring which encloses part of the gamma chain. F(1) is attached to F(0) by a central stalk formed by the gamma and epsilon chains, while a peripheral stalk is formed by the delta and b chains.

Its subcellular location is the cell membrane. Its function is as follows. F(1)F(0) ATP synthase produces ATP from ADP in the presence of a proton or sodium gradient. F-type ATPases consist of two structural domains, F(1) containing the extramembraneous catalytic core and F(0) containing the membrane proton channel, linked together by a central stalk and a peripheral stalk. During catalysis, ATP synthesis in the catalytic domain of F(1) is coupled via a rotary mechanism of the central stalk subunits to proton translocation. In terms of biological role, key component of the F(0) channel; it plays a direct role in translocation across the membrane. A homomeric c-ring of between 10-14 subunits forms the central stalk rotor element with the F(1) delta and epsilon subunits. The sequence is that of ATP synthase subunit c from Halalkalibacterium halodurans (strain ATCC BAA-125 / DSM 18197 / FERM 7344 / JCM 9153 / C-125) (Bacillus halodurans).